Reading from the N-terminus, the 471-residue chain is ATP synthase subunit beta (471 aa).

153–160 contributes to the ATP binding site; sequence GGAGVGKT.

It belongs to the ATPase alpha/beta chains family. F-type ATPases have 2 components, CF(1) - the catalytic core - and CF(0) - the membrane proton channel. CF(1) has five subunits: alpha(3), beta(3), gamma(1), delta(1), epsilon(1). CF(0) has four main subunits: a(1), b(1), b'(1) and c(9-12).

The protein resides in the cell membrane. It catalyses the reaction ATP + H2O + 4 H(+)(in) = ADP + phosphate + 5 H(+)(out). In terms of biological role, produces ATP from ADP in the presence of a proton gradient across the membrane. The catalytic sites are hosted primarily by the beta subunits. This is ATP synthase subunit beta from Roseiflexus castenholzii (strain DSM 13941 / HLO8).